The chain runs to 449 residues: VIRF-1 (449 aa).

The interval 1-60 (MDPGQRPNPFGAPGAIPKKPCLSQGSPGTSGSGAPCDEPSRSESPGEGPSGTGGSAAAGD) is disordered. Positions 89 to 195 (KASIKDWIVC…HHFLVFRVRK (107 aa)) form a DNA-binding region, IRF tryptophan pentad repeat. Residues K406 and K442 each carry the N6-propionyllysine; by host modification.

Belongs to the IRF family. Forms homodimers. Interacts with host IRF3, IRF7, and CREBBP. Interacts with host SYNCRIP. Interacts with host USP7. Interacts (via C-terminus) with host HERC5. Interacts with host GABARAPL1. Interacts with host SIRT6. In terms of processing, ISGylated. Post-translationally, propionylated in lysine residues Lys-406 and Lys-442, which is required for effective inhibition of IFN-beta production and antiviral signaling.

It localises to the host cytoplasm. Its function is as follows. Plays a role in the inhibition of host innate response by repressing the expression of interferon-inducible genes and blocking host IRF1- and IRF3-mediated transcription. Blocks the interaction between host IRF3 and CREBBP. Regulates the host cellular metabolism by increasing glucose uptake, ATP production and lactate secretion through down-regulation of heterogeneous nuclear ribonuclear protein Q1/SYNCRIP. Mechanistically, induces ubiquitination and degradation of SYNCRIP through the ubiquitin-proteasome pathway by recruiting KLHL3/CUL3 ubiquitin ligase complex. Disrupts host TP53 signaling pathway during viral infection by interacting with host USP7 and thereby decreasing the availability of USP7 for deubiquitinating and stabilizing TP53. Plays a role in the global inhibition of protein ISGylation by interacting with host HERC5 leading to its inhibition. Promotes its own propionylation by blocking SIRT6 interaction with ubiquitin-specific peptidase 10/USP10 leading to SIRT6 degradation via a ubiquitin-proteasome pathway. In turn, propionylation is required to block IRF3-CBP/p300 recruitment and to repress the STING DNA sensing pathway. Plays a role in the activation of mitophagy during infection via interaction with the host proteins NIX/BNIP3L, TUFM and GABARAPL1 thereby inhibiting antiviral responses and contributing to productive replication. This chain is VIRF-1 (vIRF-1), found in Homo sapiens (Human).